Here is a 338-residue protein sequence, read N- to C-terminus: Solute carrier family 35 member B1 homolog (338 aa).

9 helical membrane passes run 9 to 29, 53 to 73, 84 to 104, 111 to 131, 135 to 155, 168 to 188, 213 to 233, 244 to 264, and 284 to 304; these read FVIYAVGIFVCYFLYGIVQEK, LALVWVQCLCNYVFAKVLLTI, GSYVACSLTYLLAMVSTNMAM, TAVVGKSAKPIPVMILGVLIG, YSWTRYACVLTIVLGVILFMY, TLLGEVLLFLSLSMDGLTGAV, LMLGVAMVFTGEAKEFMYFTI, LIAVCGVLGQFFIFLMVASFG, and VLLFGNVLIARQWLGAVLVFA. Positions 334–338 match the Di-lysine motif motif; sequence KKLNS.

The protein belongs to the nucleotide-sugar transporter family. SLC35B subfamily.

Its subcellular location is the endoplasmic reticulum membrane. Probable sugar transporter. The protein is Solute carrier family 35 member B1 homolog (meigo) of Drosophila melanogaster (Fruit fly).